The following is a 138-amino-acid chain: MAKAIPKISSRRNGRIGSRKGARRIPKGVIHVQASFNNTIVTVTDVRGRVVSWSSAGTSGFKGTRRGTPFAAQTAVANAIRTVVDQGMQRAEVMIKGPGLGRDAALRAIRRSGILLTFVRDVTPMPHNGCRPPKKRRV.

Residues 1–22 (MAKAIPKISSRRNGRIGSRKGA) form a disordered region. Residues 9-22 (SSRRNGRIGSRKGA) show a composition bias toward basic residues.

The protein belongs to the universal ribosomal protein uS11 family. Part of the 30S ribosomal subunit.

The protein localises to the plastid. The protein resides in the chloroplast. This Nicotiana tomentosiformis (Tobacco) protein is Small ribosomal subunit protein uS11c.